A 135-amino-acid chain; its full sequence is ATP synthase epsilon chain (135 aa).

It belongs to the ATPase epsilon chain family. In terms of assembly, F-type ATPases have 2 components, CF(1) - the catalytic core - and CF(0) - the membrane proton channel. CF(1) has five subunits: alpha(3), beta(3), gamma(1), delta(1), epsilon(1). CF(0) has three main subunits: a, b and c.

The protein resides in the cell inner membrane. In terms of biological role, produces ATP from ADP in the presence of a proton gradient across the membrane. This chain is ATP synthase epsilon chain, found in Nitrobacter winogradskyi (strain ATCC 25391 / DSM 10237 / CIP 104748 / NCIMB 11846 / Nb-255).